Here is a 307-residue protein sequence, read N- to C-terminus: Ornithine carbamoyltransferase (307 aa).

Carbamoyl phosphate-binding positions include 51 to 54 (STRT), glutamine 78, arginine 102, and 129 to 132 (HPCQ). L-ornithine-binding positions include asparagine 160, aspartate 220, and 224–225 (SM). Residues 260-261 (CL) and arginine 288 contribute to the carbamoyl phosphate site.

This sequence belongs to the aspartate/ornithine carbamoyltransferase superfamily. OTCase family.

Its subcellular location is the cytoplasm. The enzyme catalyses carbamoyl phosphate + L-ornithine = L-citrulline + phosphate + H(+). The protein operates within amino-acid biosynthesis; L-arginine biosynthesis; L-arginine from L-ornithine and carbamoyl phosphate: step 1/3. Its function is as follows. Reversibly catalyzes the transfer of the carbamoyl group from carbamoyl phosphate (CP) to the N(epsilon) atom of ornithine (ORN) to produce L-citrulline. The chain is Ornithine carbamoyltransferase (argF) from Archaeoglobus fulgidus (strain ATCC 49558 / DSM 4304 / JCM 9628 / NBRC 100126 / VC-16).